The primary structure comprises 341 residues: RNA 3'-terminal phosphate cyclase (341 aa).

ATP-binding positions include Q102 and 283-287 (HLADQ). The active-site Tele-AMP-histidine intermediate is the H308.

The protein belongs to the RNA 3'-terminal cyclase family. Type 1 subfamily.

The protein resides in the cytoplasm. It catalyses the reaction a 3'-end 3'-phospho-ribonucleotide-RNA + ATP = a 3'-end 2',3'-cyclophospho-ribonucleotide-RNA + AMP + diphosphate. Functionally, catalyzes the conversion of 3'-phosphate to a 2',3'-cyclic phosphodiester at the end of RNA. The mechanism of action of the enzyme occurs in 3 steps: (A) adenylation of the enzyme by ATP; (B) transfer of adenylate to an RNA-N3'P to produce RNA-N3'PP5'A; (C) and attack of the adjacent 2'-hydroxyl on the 3'-phosphorus in the diester linkage to produce the cyclic end product. The biological role of this enzyme is unknown but it is likely to function in some aspects of cellular RNA processing. The chain is RNA 3'-terminal phosphate cyclase from Pseudomonas aeruginosa (strain UCBPP-PA14).